The following is a 371-amino-acid chain: Deoxyhypusine synthase (371 aa).

NAD(+) contacts are provided by residues 107-111, 133-135, Glu139, and Asp240; these read SNLIS and TTG. Residue 138-139 coordinates spermidine; it reads EE. Asp245 lines the spermidine pocket. Gly287 contributes to the NAD(+) binding site. His292 lines the spermidine pocket. 312–313 contributes to the NAD(+) binding site; that stretch reads TA. Spermidine-binding positions include 318–320 and 327–333; these read GSD and EAVSWGK. Catalysis depends on Lys333, which acts as the Nucleophile. 346 to 347 lines the NAD(+) pocket; that stretch reads DA.

Belongs to the deoxyhypusine synthase family. The cofactor is NAD(+). In terms of tissue distribution, expressed in shoot tips.

The catalysed reaction is [eIF5A protein]-L-lysine + spermidine = [eIF5A protein]-deoxyhypusine + propane-1,3-diamine. It functions in the pathway protein modification; eIF5A hypusination. Its function is as follows. Catalyzes the NAD-dependent oxidative cleavage of spermidine and the subsequent transfer of the butylamine moiety of spermidine to the epsilon-amino group of a specific lysine residue of the eIF-5A precursor protein to form the intermediate deoxyhypusine residue. Also able to produce homospermidine from putrescine. This Senecio vernalis (Spring groundsel) protein is Deoxyhypusine synthase (DHS1).